The following is a 178-amino-acid chain: Large ribosomal subunit protein uL5 (178 aa).

It belongs to the universal ribosomal protein uL5 family. In terms of assembly, part of the 50S ribosomal subunit; part of the 5S rRNA/L5/L18/L25 subcomplex. Contacts the 5S rRNA and the P site tRNA. Forms a bridge to the 30S subunit in the 70S ribosome.

This is one of the proteins that bind and probably mediate the attachment of the 5S RNA into the large ribosomal subunit, where it forms part of the central protuberance. In the 70S ribosome it contacts protein S13 of the 30S subunit (bridge B1b), connecting the 2 subunits; this bridge is implicated in subunit movement. Contacts the P site tRNA; the 5S rRNA and some of its associated proteins might help stabilize positioning of ribosome-bound tRNAs. The polypeptide is Large ribosomal subunit protein uL5 (Psychrobacter cryohalolentis (strain ATCC BAA-1226 / DSM 17306 / VKM B-2378 / K5)).